The sequence spans 373 residues: tRNA-specific 2-thiouridylase MnmA (373 aa).

Residues 12 to 19 and M38 contribute to the ATP site; that span reads GMSGGVDS. An interaction with target base in tRNA region spans residues 98–100; sequence NPD. C103 functions as the Nucleophile in the catalytic mechanism. A disulfide bridge connects residues C103 and C200. G127 contacts ATP. The interval 150–152 is interaction with tRNA; it reads KDQ. C200 functions as the Cysteine persulfide intermediate in the catalytic mechanism. The interval 312–313 is interaction with tRNA; it reads RY.

It belongs to the MnmA/TRMU family.

The protein resides in the cytoplasm. The enzyme catalyses S-sulfanyl-L-cysteinyl-[protein] + uridine(34) in tRNA + AH2 + ATP = 2-thiouridine(34) in tRNA + L-cysteinyl-[protein] + A + AMP + diphosphate + H(+). Catalyzes the 2-thiolation of uridine at the wobble position (U34) of tRNA, leading to the formation of s(2)U34. The protein is tRNA-specific 2-thiouridylase MnmA of Streptococcus agalactiae serotype III (strain NEM316).